We begin with the raw amino-acid sequence, 45 residues long: Large ribosomal subunit protein bL34 (45 aa).

It belongs to the bacterial ribosomal protein bL34 family.

The sequence is that of Large ribosomal subunit protein bL34 from Acidothermus cellulolyticus (strain ATCC 43068 / DSM 8971 / 11B).